The primary structure comprises 276 residues: Undecaprenyl-diphosphatase (276 aa).

A run of 8 helical transmembrane segments spans residues 1 to 21 (MSWLQVIVLSIVQGLTEFLPV), 39 to 59 (AGASFTAVTQLGTEFAVLIYF), 84 to 104 (YRLGWFVIVGTIPIGVFGLLF), 115 to 135 (LWLVATALIVFSVVIAAAEYY), 159 to 179 (LALMPGVSRSGATISAGLFLG), 188 to 208 (FGFLLAIPAVLASGLFSLPDA), 222 to 242 (QLIVATVIAFVVGFAAIAWFL), and 253 to 273 (FVGYRVVLGVVVLALLGTGVL).

It belongs to the UppP family.

The protein resides in the cell membrane. The catalysed reaction is di-trans,octa-cis-undecaprenyl diphosphate + H2O = di-trans,octa-cis-undecaprenyl phosphate + phosphate + H(+). Its function is as follows. Catalyzes the dephosphorylation of undecaprenyl diphosphate (UPP). Confers resistance to bacitracin. The chain is Undecaprenyl-diphosphatase from Mycolicibacterium smegmatis (strain ATCC 700084 / mc(2)155) (Mycobacterium smegmatis).